The following is a 213-amino-acid chain: Orotate phosphoribosyltransferase (213 aa).

Lys26 provides a ligand contact to 5-phospho-alpha-D-ribose 1-diphosphate. 34–35 (FF) contacts orotate. 5-phospho-alpha-D-ribose 1-diphosphate contacts are provided by residues 72–73 (YK), Arg99, Lys100, Lys103, His105, and 124–132 (DDVITAGTA). Orotate contacts are provided by Thr128 and Arg156.

The protein belongs to the purine/pyrimidine phosphoribosyltransferase family. PyrE subfamily. In terms of assembly, homodimer. Mg(2+) serves as cofactor.

It carries out the reaction orotidine 5'-phosphate + diphosphate = orotate + 5-phospho-alpha-D-ribose 1-diphosphate. Its pathway is pyrimidine metabolism; UMP biosynthesis via de novo pathway; UMP from orotate: step 1/2. Functionally, catalyzes the transfer of a ribosyl phosphate group from 5-phosphoribose 1-diphosphate to orotate, leading to the formation of orotidine monophosphate (OMP). The protein is Orotate phosphoribosyltransferase of Pseudomonas syringae pv. syringae (strain B728a).